The sequence spans 314 residues: Ketimine reductase mu-crystallin (314 aa).

Arg-47 contributes to the 3,3',5-triiodo-L-thyronine binding site. NADPH-binding residues include Ser-91, His-92, Arg-119, Ala-144, Val-146, Gln-147, Asn-168, Arg-169, Thr-170, Asn-173, Thr-205, and Met-206. Glu-257 is a binding site for 3,3',5-triiodo-L-thyronine. Residue Ser-292 coordinates NADPH.

Belongs to the ornithine cyclodeaminase/mu-crystallin family. Homodimer. Binds the thyroid hormone triiodothyronine (T3); T3 binding inhibits enzymatic activity.

The protein localises to the cytoplasm. The catalysed reaction is L-pipecolate + NAD(+) = Delta(1)-piperideine-2-carboxylate + NADH + H(+). It catalyses the reaction L-pipecolate + NADP(+) = Delta(1)-piperideine-2-carboxylate + NADPH + H(+). It carries out the reaction L-proline + NADP(+) = 1-pyrroline-2-carboxylate + NADPH + H(+). The enzyme catalyses L-proline + NAD(+) = 1-pyrroline-2-carboxylate + NADH + H(+). The catalysed reaction is (3R)-1,4-thiomorpholine-3-carboxylate + NAD(+) = 3,4-dehydrothiomorpholine-3-carboxylate + NADH + 2 H(+). It catalyses the reaction (3R)-1,4-thiomorpholine-3-carboxylate + NADP(+) = 3,4-dehydrothiomorpholine-3-carboxylate + NADPH + 2 H(+). It carries out the reaction (S)-cystathionine ketimine + NADH + 2 H(+) = (3R,5S)-2,3,5,6,7-pentahydro-1,4-thiazepine-3,5-dicarboxylate + NAD(+). The enzyme catalyses (S)-cystathionine ketimine + NADPH + 2 H(+) = (3R,5S)-2,3,5,6,7-pentahydro-1,4-thiazepine-3,5-dicarboxylate + NADP(+). The catalysed reaction is (R)-lanthionine ketimine + NADPH + 2 H(+) = (3R,5R)-1,4-thiomorpholine-3,5-dicarboxylate + NADP(+). It catalyses the reaction Delta(2)-thiazoline-2-carboxylate + NADPH + 2 H(+) = L-thiazolidine-2-carboxylate + NADP(+). In terms of biological role, catalyzes the NAD(P)H-dependent reduction of imine double bonds of a number of cyclic ketimine substrates, including sulfur-containing cyclic ketimines. Under physiological conditions, it efficiently catalyzes delta(1)-piperideine-2-carboxylate (P2C) and delta(1)-pyrroline-2-carboxylate (Pyr2C) reduction, suggesting a central role in lysine and glutamate metabolism. Additional substrates are (S)-cystathionine ketimine (CysK), 3,4-dehydrothiomorpholine-3-carboxylate (AECK), and (R)-lanthionine ketimine (LK) that is reduced at very low rate compared to other substrates. Also catalyzes the NAD(P)H-dependent reduction of delta(2)-thiazoline-2-carboxylate (T2C). The polypeptide is Ketimine reductase mu-crystallin (CRYM) (Bos taurus (Bovine)).